We begin with the raw amino-acid sequence, 645 residues long: DNA mismatch repair protein MutL (645 aa).

Belongs to the DNA mismatch repair MutL/HexB family.

This protein is involved in the repair of mismatches in DNA. It is required for dam-dependent methyl-directed DNA mismatch repair. May act as a 'molecular matchmaker', a protein that promotes the formation of a stable complex between two or more DNA-binding proteins in an ATP-dependent manner without itself being part of a final effector complex. This Pediococcus pentosaceus (strain ATCC 25745 / CCUG 21536 / LMG 10740 / 183-1w) protein is DNA mismatch repair protein MutL.